We begin with the raw amino-acid sequence, 274 residues long: Rhamnulose-1-phosphate aldolase (274 aa).

Glu117 is a catalytic residue. Zn(2+)-binding residues include His141, His143, and His212.

This sequence belongs to the aldolase class II family. RhaD subfamily. In terms of assembly, homotetramer. Requires Zn(2+) as cofactor.

Its subcellular location is the cytoplasm. The enzyme catalyses L-rhamnulose 1-phosphate = (S)-lactaldehyde + dihydroxyacetone phosphate. Its pathway is carbohydrate degradation; L-rhamnose degradation; glycerone phosphate from L-rhamnose: step 3/3. In terms of biological role, catalyzes the reversible cleavage of L-rhamnulose-1-phosphate to dihydroxyacetone phosphate (DHAP) and L-lactaldehyde. The sequence is that of Rhamnulose-1-phosphate aldolase from Shigella boydii serotype 4 (strain Sb227).